Consider the following 548-residue polypeptide: Membrane protein insertase YidC (548 aa).

The chain crosses the membrane as a helical span at residues 6 to 26 (NLLVIALLFVSFMIWQAWEQD). The tract at residues 28–55 (NPQPQAQQTTQTTTTAAGSAADQGVPAS) is disordered. The span at 30 to 50 (QPQAQQTTQTTTTAAGSAADQ) shows a compositional bias: low complexity. The next 4 helical transmembrane spans lie at 350–370 (FVGN…GIMY), 420–440 (LGGC…YYML), 458–478 (LSAQ…MFFI), and 499–519 (PVIF…YYIV).

It belongs to the OXA1/ALB3/YidC family. Type 1 subfamily. In terms of assembly, interacts with the Sec translocase complex via SecD. Specifically interacts with transmembrane segments of nascent integral membrane proteins during membrane integration.

It localises to the cell inner membrane. Its function is as follows. Required for the insertion and/or proper folding and/or complex formation of integral membrane proteins into the membrane. Involved in integration of membrane proteins that insert both dependently and independently of the Sec translocase complex, as well as at least some lipoproteins. Aids folding of multispanning membrane proteins. The chain is Membrane protein insertase YidC from Escherichia fergusonii (strain ATCC 35469 / DSM 13698 / CCUG 18766 / IAM 14443 / JCM 21226 / LMG 7866 / NBRC 102419 / NCTC 12128 / CDC 0568-73).